A 103-amino-acid polypeptide reads, in one-letter code: Large ribosomal subunit protein uL24 (103 aa).

It belongs to the universal ribosomal protein uL24 family. As to quaternary structure, part of the 50S ribosomal subunit.

In terms of biological role, one of two assembly initiator proteins, it binds directly to the 5'-end of the 23S rRNA, where it nucleates assembly of the 50S subunit. One of the proteins that surrounds the polypeptide exit tunnel on the outside of the subunit. This Endomicrobium trichonymphae protein is Large ribosomal subunit protein uL24.